The following is a 306-amino-acid chain: Agmatinase (306 aa).

Mn(2+) contacts are provided by H126, D149, H151, D153, D230, and D232.

Belongs to the arginase family. Agmatinase subfamily. Mn(2+) is required as a cofactor.

The catalysed reaction is agmatine + H2O = urea + putrescine. Its pathway is amine and polyamine biosynthesis; putrescine biosynthesis via agmatine pathway; putrescine from agmatine: step 1/1. Its function is as follows. Catalyzes the formation of putrescine from agmatine. In Serratia proteamaculans (strain 568), this protein is Agmatinase.